Reading from the N-terminus, the 688-residue chain is Translation initiation factor IF-2 (688 aa).

The disordered stretch occupies residues 62-103; that stretch reads EFEVEEKVVRSKKNSNKKKKKGKGNEDKRQDNFAGRQQTQIV. The segment covering 71–83 has biased composition (basic residues); the sequence is RSKKNSNKKKKKG. Residues 190–359 enclose the tr-type G domain; sequence ERPAVVTIMG…LLVSEVEEYK (170 aa). Residues 199–206 form a G1 region; it reads GHVDHGKT. 199–206 contributes to the GTP binding site; it reads GHVDHGKT. The segment at 224-228 is G2; that stretch reads GITQH. Residues 245–248 form a G3 region; sequence DTPG. Residues 245–249 and 299–302 each bind GTP; these read DTPGH and NKMD. Residues 299–302 are G4; sequence NKMD. A G5 region spans residues 335–337; that stretch reads SAI.

It belongs to the TRAFAC class translation factor GTPase superfamily. Classic translation factor GTPase family. IF-2 subfamily.

It localises to the cytoplasm. In terms of biological role, one of the essential components for the initiation of protein synthesis. Protects formylmethionyl-tRNA from spontaneous hydrolysis and promotes its binding to the 30S ribosomal subunits. Also involved in the hydrolysis of GTP during the formation of the 70S ribosomal complex. This is Translation initiation factor IF-2 from Bacillus cereus (strain G9842).